The primary structure comprises 78 residues: Large ribosomal subunit protein bL28 (78 aa).

The protein belongs to the bacterial ribosomal protein bL28 family.

The chain is Large ribosomal subunit protein bL28 from Haemophilus influenzae (strain 86-028NP).